An 81-amino-acid chain; its full sequence is Cytochrome b559 subunit alpha (81 aa).

A helical transmembrane segment spans residues 21-35 (VIHSITIPSLFVSGW). Residue histidine 23 coordinates heme.

This sequence belongs to the PsbE/PsbF family. Heterodimer of an alpha subunit and a beta subunit. PSII is composed of 1 copy each of membrane proteins PsbA, PsbB, PsbC, PsbD, PsbE, PsbF, PsbH, PsbI, PsbJ, PsbK, PsbL, PsbM, PsbT, PsbX, PsbY, PsbZ, Psb30/Ycf12, at least 3 peripheral proteins of the oxygen-evolving complex and a large number of cofactors. It forms dimeric complexes. Requires heme b as cofactor.

The protein resides in the plastid. Its subcellular location is the chloroplast thylakoid membrane. This b-type cytochrome is tightly associated with the reaction center of photosystem II (PSII). PSII is a light-driven water:plastoquinone oxidoreductase that uses light energy to abstract electrons from H(2)O, generating O(2) and a proton gradient subsequently used for ATP formation. It consists of a core antenna complex that captures photons, and an electron transfer chain that converts photonic excitation into a charge separation. The sequence is that of Cytochrome b559 subunit alpha from Mesostigma viride (Green alga).